Consider the following 142-residue polypeptide: Putative pre-16S rRNA nuclease (142 aa).

The protein belongs to the YqgF nuclease family.

The protein localises to the cytoplasm. In terms of biological role, could be a nuclease involved in processing of the 5'-end of pre-16S rRNA. The sequence is that of Putative pre-16S rRNA nuclease from Lactobacillus helveticus (strain DPC 4571).